A 460-amino-acid chain; its full sequence is Elongation factor 1-alpha-A (460 aa).

Residue G2 is modified to N,N,N-trimethylglycine. Residue K3 is modified to N6,N6-dimethyllysine; alternate. Residue K3 is modified to N6-methyllysine; alternate. A tr-type G domain is found at 5 to 240; that stretch reads KGHINVVVIG…DSIEPPARPT (236 aa). Residues 14-21 form a G1 region; sequence GHVDSGKS. 14 to 21 is a binding site for GTP; sequence GHVDSGKS. K30 carries the post-translational modification N6-methyllysine. The tract at residues 70 to 74 is G2; the sequence is GITID. K79 carries the post-translational modification N6,N6,N6-trimethyllysine. The G3 stretch occupies residues 91–94; it reads DAPG. Residues 91-95 and 153-156 contribute to the GTP site; these read DAPGH and NKMD. Residues 153 to 156 form a G4 region; it reads NKMD. The segment at 192 to 194 is G5; that stretch reads SGF. K316 is subject to N6,N6-dimethyllysine; alternate. K316 carries the N6-methyllysine; alternate modification. At K390 the chain carries N6-methyllysine.

The protein belongs to the TRAFAC class translation factor GTPase superfamily. Classic translation factor GTPase family. EF-Tu/EF-1A subfamily.

Its subcellular location is the cytoplasm. This protein promotes the GTP-dependent binding of aminoacyl-tRNA to the A-site of ribosomes during protein biosynthesis. The protein is Elongation factor 1-alpha-A (tef101) of Schizosaccharomyces pombe (strain 972 / ATCC 24843) (Fission yeast).